Here is a 219-residue protein sequence, read N- to C-terminus: Transmembrane protein 17B (219 aa).

Residue Asn-26 is glycosylated (N-linked (GlcNAc...) asparagine). A run of 4 helical transmembrane segments spans residues 51 to 71 (MMLY…IITM), 84 to 104 (ILLT…LYIG), 116 to 136 (LAGF…FLLT), and 147 to 167 (LAVH…SFLV). 2 N-linked (GlcNAc...) asparagine glycosylation sites follow: Asn-195 and Asn-203.

It belongs to the TMEM17 family. Part of the tectonic-like complex (also named B9 complex).

Its subcellular location is the cell projection. It localises to the cilium membrane. Functionally, transmembrane component of the tectonic-like complex, a complex localized at the transition zone of primary cilia and acting as a barrier that prevents diffusion of transmembrane proteins between the cilia and plasma membranes. Required for ciliogenesis and sonic hedgehog/SHH signaling. The protein is Transmembrane protein 17B (Tmem17-b) of Xenopus tropicalis (Western clawed frog).